The following is a 421-amino-acid chain: Histidine--tRNA ligase (421 aa).

The protein belongs to the class-II aminoacyl-tRNA synthetase family. As to quaternary structure, homodimer.

It is found in the cytoplasm. It carries out the reaction tRNA(His) + L-histidine + ATP = L-histidyl-tRNA(His) + AMP + diphosphate + H(+). This chain is Histidine--tRNA ligase, found in Fervidobacterium nodosum (strain ATCC 35602 / DSM 5306 / Rt17-B1).